The chain runs to 540 residues: Glucose-6-phosphate isomerase (540 aa).

Glutamate 350 (proton donor) is an active-site residue. Residues histidine 381 and lysine 503 contribute to the active site.

The protein belongs to the GPI family.

The protein resides in the cytoplasm. It carries out the reaction alpha-D-glucose 6-phosphate = beta-D-fructose 6-phosphate. It participates in carbohydrate biosynthesis; gluconeogenesis. Its pathway is carbohydrate degradation; glycolysis; D-glyceraldehyde 3-phosphate and glycerone phosphate from D-glucose: step 2/4. In terms of biological role, catalyzes the reversible isomerization of glucose-6-phosphate to fructose-6-phosphate. The protein is Glucose-6-phosphate isomerase of Burkholderia pseudomallei (strain 1106a).